The following is a 535-amino-acid chain: Flavonoid 3'-monooxygenase CYP75B4 (535 aa).

The chain crosses the membrane as a helical span at residues 8 to 28; that stretch reads ISTSLLLTTVALSVIVCYALV. Cys469 is a heme binding site.

This sequence belongs to the cytochrome P450 family. The cofactor is heme.

It is found in the membrane. The catalysed reaction is a 3'-unsubstituted flavone + reduced [NADPH--hemoprotein reductase] + O2 = a 3'-hydroxyflavone + oxidized [NADPH--hemoprotein reductase] + H2O + H(+). The protein operates within secondary metabolite biosynthesis; flavonoid biosynthesis. Catalyzes the 3'-hydroxylation of the flavonoid B-ring to the 3',4'-hydroxylated state. Catalyzes in vitro 3'-hydroxylation of different flavonoids. Catalyzes the conversion of apigenin to luteolin, naringenin to eriodictyol, and kaempferol to quercetin. Possesses specific 5'-hydroxylase activity toward chrysoeriol (a 3'-methoxylated flavone) and is indispensable for tricin formation. Converts chrysoeriol to selgin, a precursor of tricin, suggesting that chrysoeriol, instead of tricetin, is an intermediate in tricin biosynthesis. This chain is Flavonoid 3'-monooxygenase CYP75B4, found in Oryza sativa subsp. japonica (Rice).